A 506-amino-acid chain; its full sequence is AMP phosphorylase (506 aa).

AMP-binding positions include glycine 167, 193-198 (SRAITG), and threonine 202. Aspartate 255 (proton donor) is an active-site residue. The AMP site is built by serine 263 and lysine 287.

The protein belongs to the thymidine/pyrimidine-nucleoside phosphorylase family. Type 2 subfamily.

It catalyses the reaction AMP + phosphate = alpha-D-ribose 1,5-bisphosphate + adenine. The catalysed reaction is CMP + phosphate = cytosine + alpha-D-ribose 1,5-bisphosphate. It carries out the reaction UMP + phosphate = alpha-D-ribose 1,5-bisphosphate + uracil. Catalyzes the conversion of AMP and phosphate to adenine and ribose 1,5-bisphosphate (R15P). Exhibits phosphorylase activity toward CMP and UMP in addition to AMP. Functions in an archaeal AMP degradation pathway, together with R15P isomerase and RubisCO. In Methanosarcina acetivorans (strain ATCC 35395 / DSM 2834 / JCM 12185 / C2A), this protein is AMP phosphorylase.